The following is an 84-amino-acid chain: Large ribosomal subunit protein bL27 (84 aa).

The segment at 1–22 is disordered; the sequence is MAHKKGGGSTKNGRDSNPKYLG.

It belongs to the bacterial ribosomal protein bL27 family.

The sequence is that of Large ribosomal subunit protein bL27 from Prosthecochloris aestuarii (strain DSM 271 / SK 413).